The primary structure comprises 431 residues: MYVEIIDVRAREVLDSRGNPTVEVEVLLEDGSFGSAIVPSGASTGKFEALELRDGDKKRYMGKGVLKAVEHVNEIIAPRVVGLNAFDQVYLDKVLLELDGTENKSKLGANAILGVSMAVARAASESAGVPLYKYLGGANAKILPVPFMNVINGGAHADNSLDIQEFMLVPAGAPSFKEALRYGAEVFHTLKKILKDAGHVTAVGDEGGFAPNLSSNEEAIQVLIEAIKKAGYEPGKDIYIALDCAASEFYNEETGKYNIDGTEKTGDELIEYYSMLIDKYWPVIISIEDPFEQEDWDSYVKFTQKVGGKVQIVGDDLYVTNVKRLEKGIELFASNSILIKLNQIGSVTETLDAIEMAKTAGMTNVISHRSGETEDTFIADLAVATNAGMIKTGSLSRSERIAKYNRLLRIEEELGDAAIYKGLGAFYSIKR.

Q164 contacts (2R)-2-phosphoglycerate. E206 functions as the Proton donor in the catalytic mechanism. Residues D243, E288, and D315 each contribute to the Mg(2+) site. (2R)-2-phosphoglycerate is bound by residues K340, R369, S370, and K391. Catalysis depends on K340, which acts as the Proton acceptor.

The protein belongs to the enolase family. The cofactor is Mg(2+).

The protein localises to the cytoplasm. The protein resides in the secreted. It localises to the cell surface. It catalyses the reaction (2R)-2-phosphoglycerate = phosphoenolpyruvate + H2O. Its pathway is carbohydrate degradation; glycolysis; pyruvate from D-glyceraldehyde 3-phosphate: step 4/5. In terms of biological role, catalyzes the reversible conversion of 2-phosphoglycerate (2-PG) into phosphoenolpyruvate (PEP). It is essential for the degradation of carbohydrates via glycolysis. The protein is Enolase of Fervidobacterium nodosum (strain ATCC 35602 / DSM 5306 / Rt17-B1).